The chain runs to 221 residues: Germin-like protein 5-1 (221 aa).

The first 25 residues, 1-25 (MARPSLPCAVVAVLLLALLPTPSTA), serve as a signal peptide directing secretion. Cysteines 35 and 50 form a disulfide. The Cupin type-1 domain maps to 62–210 (KGLAAAGNTN…AFQVGTKEVE (149 aa)). Asn-71 carries an N-linked (GlcNAc...) asparagine glycan. Mn(2+) contacts are provided by His-110, His-112, Glu-117, and His-156.

The protein belongs to the germin family. As to quaternary structure, oligomer (believed to be a pentamer but probably hexamer).

Its subcellular location is the secreted. It is found in the extracellular space. It localises to the apoplast. Functionally, may play a role in plant defense. Probably has no oxalate oxidase activity even if the active site is conserved. This is Germin-like protein 5-1 from Oryza sativa subsp. japonica (Rice).